The following is a 284-amino-acid chain: Phosphatidylglycerol--prolipoprotein diacylglyceryl transferase (284 aa).

The next 7 helical transmembrane spans lie at 21 to 41 (IEVH…FYMA), 62 to 82 (YFLW…ILIY), 106 to 126 (FVGI…IASY), 136 to 156 (LLIY…FGRI), 190 to 210 (PSQL…VMWA), 218 to 238 (GLLI…AEFY), and 252 to 272 (LSMG…ILLY). A 1,2-diacyl-sn-glycero-3-phospho-(1'-sn-glycerol) is bound at residue arginine 155.

It belongs to the Lgt family.

The protein localises to the cell inner membrane. It catalyses the reaction L-cysteinyl-[prolipoprotein] + a 1,2-diacyl-sn-glycero-3-phospho-(1'-sn-glycerol) = an S-1,2-diacyl-sn-glyceryl-L-cysteinyl-[prolipoprotein] + sn-glycerol 1-phosphate + H(+). The protein operates within protein modification; lipoprotein biosynthesis (diacylglyceryl transfer). Catalyzes the transfer of the diacylglyceryl group from phosphatidylglycerol to the sulfhydryl group of the N-terminal cysteine of a prolipoprotein, the first step in the formation of mature lipoproteins. The chain is Phosphatidylglycerol--prolipoprotein diacylglyceryl transferase from Helicobacter pylori (strain P12).